The primary structure comprises 143 residues: Large-conductance mechanosensitive channel (143 aa).

A run of 2 helical transmembrane segments spans residues Val-19–Ile-39 and Gly-81–Ile-101.

The protein belongs to the MscL family. In terms of assembly, homopentamer.

It is found in the cell inner membrane. Channel that opens in response to stretch forces in the membrane lipid bilayer. May participate in the regulation of osmotic pressure changes within the cell. In Rhodopseudomonas palustris (strain BisB5), this protein is Large-conductance mechanosensitive channel.